The chain runs to 103 residues: uncharacterized protein (103 aa).

2 helical membrane passes run 42-62 (PFPL…VLLA) and 65-85 (TGTL…FICA).

It is found in the membrane. This is an uncharacterized protein from Saccharomyces cerevisiae (strain ATCC 204508 / S288c) (Baker's yeast).